The chain runs to 121 residues: Small ribosomal subunit protein uS13 (121 aa).

Residues 97–121 are disordered; that stretch reads VRGQRTRTNARTRRGARKTVAGKKK. Over residues 100-121 the composition is skewed to basic residues; that stretch reads QRTRTNARTRRGARKTVAGKKK.

Belongs to the universal ribosomal protein uS13 family. As to quaternary structure, part of the 30S ribosomal subunit. Forms a loose heterodimer with protein S19. Forms two bridges to the 50S subunit in the 70S ribosome.

Functionally, located at the top of the head of the 30S subunit, it contacts several helices of the 16S rRNA. In the 70S ribosome it contacts the 23S rRNA (bridge B1a) and protein L5 of the 50S subunit (bridge B1b), connecting the 2 subunits; these bridges are implicated in subunit movement. Contacts the tRNAs in the A and P-sites. This chain is Small ribosomal subunit protein uS13, found in Synechococcus sp. (strain CC9605).